Reading from the N-terminus, the 368-residue chain is Germination protease (368 aa).

A propeptide spanning residues M1–D15 is cleaved from the precursor.

It belongs to the peptidase A25 family. As to quaternary structure, homotetramer. In terms of processing, autoproteolytically processed. The inactive tetrameric zymogen termed p46 autoprocesses to a smaller form termed p41, which is active only during spore germination.

It carries out the reaction Endopeptidase action with P4 Glu or Asp, P1 preferably Glu &gt; Asp, P1' hydrophobic and P2' Ala.. Initiates the rapid degradation of small, acid-soluble proteins during spore germination. This is Germination protease from Bacillus anthracis (strain A0248).